We begin with the raw amino-acid sequence, 144 residues long: Large ribosomal subunit protein uL15 (144 aa).

Residues 1 to 53 (MRLNTLSPAEGAKHAPKRLGRGIGSGLGKTGGRGHKGQKSRSGGGVRRGFEGG) form a disordered region. Gly residues predominate over residues 21-31 (RGIGSGLGKTG).

Belongs to the universal ribosomal protein uL15 family. In terms of assembly, part of the 50S ribosomal subunit.

In terms of biological role, binds to the 23S rRNA. This chain is Large ribosomal subunit protein uL15, found in Pectobacterium carotovorum subsp. carotovorum (strain PC1).